Here is a 422-residue protein sequence, read N- to C-terminus: Tyrosine--tRNA ligase (422 aa).

Residue tyrosine 35 coordinates L-tyrosine. The 'HIGH' region signature appears at 40-49 (PTADSLHIGH). Tyrosine 170 and glutamine 174 together coordinate L-tyrosine. Residues 232–236 (KFGKT) carry the 'KMSKS' region motif. Lysine 235 serves as a coordination point for ATP. The 67-residue stretch at 355–421 (LTLVDLLVES…GKKKYFLVTY (67 aa)) folds into the S4 RNA-binding domain.

Belongs to the class-I aminoacyl-tRNA synthetase family. TyrS type 1 subfamily. Homodimer.

It is found in the cytoplasm. The enzyme catalyses tRNA(Tyr) + L-tyrosine + ATP = L-tyrosyl-tRNA(Tyr) + AMP + diphosphate + H(+). Functionally, catalyzes the attachment of tyrosine to tRNA(Tyr) in a two-step reaction: tyrosine is first activated by ATP to form Tyr-AMP and then transferred to the acceptor end of tRNA(Tyr). The protein is Tyrosine--tRNA ligase of Bacillus pumilus (strain SAFR-032).